Here is a 342-residue protein sequence, read N- to C-terminus: Epoxide hydrolase srdG (342 aa).

One can recognise an AB hydrolase-1 domain in the interval Ala44–Lys332. Residue Asp122 is the Nucleophile of the active site. The Proton acceptor role is filled by His320.

The protein belongs to the AB hydrolase superfamily. Epoxide hydrolase family.

In terms of biological role, highly reducing polyketide synthase; part of the gene cluster that mediates the biosynthesis of sordarial, a salicylic aldehyde structurally related to the phytotoxin pyriculol. The most interesting aspect of this pathway is formation of an aromatic product from the highly reducing polyketide synthase srdA. SrdA synthesizes a reduced polyketide chain from one molecule of acetyl-CoA and five molecules of malonyl-CoA. The polyketide chain is then reductively released as an aldehyde. The oxidoreductases srdC, srdD and srdE then oxidize one of the hydroxy groups to facilitate the intramolecular aldol condensation, followed by dehydration to yield a salicylic aldehyde. This aldehyde can undergo facile reduction by endogenous reductases to yield the alcohol 1-hydroxy-2-hydroxymethyl-3-pent-1,3-dienylbenzene. The flavin-dependent srdI counteract against the propensity of the aldehydes to be reduced under physiological conditions and is responsible for reoxidizing 1-hydroxy-2-hydroxymethyl-3-pent-1,3-dienylbenzene back to the salicylic aldehyde. This salicylic aldehyde is then selectively epoxidized by the cupin-domain-containing oxidoreductase srdB to yield the epoxide, which can be hydrolyzed stereoselectively by the hydrolase srdG to give the final product sordarial. This is Epoxide hydrolase srdG from Neurospora crassa (strain ATCC 24698 / 74-OR23-1A / CBS 708.71 / DSM 1257 / FGSC 987).